A 343-amino-acid chain; its full sequence is Dimethyladenosine transferase 1, mitochondrial (343 aa).

Residues 28-31 (QNFL), Asn29, Leu31, Gly56, Glu78, Asp133, and Asn169 contribute to the S-adenosyl-L-methionine site.

The protein belongs to the class I-like SAM-binding methyltransferase superfamily. rRNA adenine N(6)-methyltransferase family. KsgA subfamily.

It localises to the mitochondrion. Probable S-adenosyl-L-methionine-dependent methyltransferase which specifically dimethylates mitochondrial 12S rRNA at the conserved stem loop. Also required for basal transcription of mitochondrial DNA. Stimulates transcription independently of the methyltransferase activity. The sequence is that of Dimethyladenosine transferase 1, mitochondrial from Vermamoeba vermiformis (Amoeba).